Consider the following 540-residue polypeptide: Protein dml-1 (540 aa).

The disordered stretch occupies residues 517 to 540; sequence NELAEMADEYHEGWSSGSDDGDDD.

Belongs to the misato family.

The protein resides in the mitochondrion. In terms of biological role, involved in the partitioning of the mitochondrial organelle and mitochondrial DNA (mtDNA) inheritance. The polypeptide is Protein dml-1 (dml-1) (Neurospora crassa (strain ATCC 24698 / 74-OR23-1A / CBS 708.71 / DSM 1257 / FGSC 987)).